The following is a 312-amino-acid chain: Ornithine carbamoyltransferase (312 aa).

Carbamoyl phosphate contacts are provided by residues S57 to T60, Q84, R108, and H135 to Q138. Residues N166, D226, and S230–M231 each bind L-ornithine. Carbamoyl phosphate is bound by residues C265–L266 and R293.

This sequence belongs to the aspartate/ornithine carbamoyltransferase superfamily. OTCase family.

Its subcellular location is the cytoplasm. The catalysed reaction is carbamoyl phosphate + L-ornithine = L-citrulline + phosphate + H(+). It participates in amino-acid biosynthesis; L-arginine biosynthesis; L-arginine from L-ornithine and carbamoyl phosphate: step 1/3. Its function is as follows. Reversibly catalyzes the transfer of the carbamoyl group from carbamoyl phosphate (CP) to the N(epsilon) atom of ornithine (ORN) to produce L-citrulline. The chain is Ornithine carbamoyltransferase from Brucella ovis (strain ATCC 25840 / 63/290 / NCTC 10512).